Consider the following 313-residue polypeptide: MSLASGPGPGWLLFSFGMGLVSGSKCPNNCLCQAQEVICTGKQLTEYPLDIPLNTRRLFLNENRITSLPAMHLGLLSDLVYLDCQNNRIREVMDYTFIGVFKLIYLDLSSNNLTSISPFTFSVLSNLVQLNIANNPHLLSLHKFTFANTTSLRYLDLRNTGLQTLDSAALYHLTTLETLFLSGNPWKCNCSFLDFAIFLIVFHMDPSDDLNATCVEPTELTGWPITRVGNPLRYMCITHLDHKDYIFLLLIGFCIFAAGTVAAWLTGVCAVLYQNTRHKSSEEDEDEAGTRVEVSRRIFQTQTSSVQEFPQLI.

The signal sequence occupies residues 1-23; that stretch reads MSLASGPGPGWLLFSFGMGLVSG. The region spanning 24-53 is the LRRNT domain; it reads SKCPNNCLCQAQEVICTGKQLTEYPLDIPL. Over 24–244 the chain is Extracellular; sequence SKCPNNCLCQ…MCITHLDHKD (221 aa). Disulfide bonds link cysteine 26-cysteine 32 and cysteine 30-cysteine 39. 5 LRR repeats span residues 54–75, 78–99, 102–123, 126–148, and 151–172; these read NTRRLFLNENRITSLPAMHLGL, DLVYLDCQNNRIREVMDYTFIG, KLIYLDLSSNNLTSISPFTFSV, NLVQLNIANNPHLLSLHKFTFAN, and SLRYLDLRNTGLQTLDSAALYH. N-linked (GlcNAc...) asparagine glycans are attached at residues asparagine 112 and asparagine 148. Residues 184 to 238 enclose the LRRCT domain; the sequence is NPWKCNCSFLDFAIFLIVFHMDPSDDLNATCVEPTELTGWPITRVGNPLRYMCIT. Intrachain disulfides connect cysteine 188/cysteine 214 and cysteine 190/cysteine 236. Asparagine 189 and asparagine 211 each carry an N-linked (GlcNAc...) asparagine glycan. The helical transmembrane segment at 245–265 threads the bilayer; the sequence is YIFLLLIGFCIFAAGTVAAWL. The Cytoplasmic portion of the chain corresponds to 266–313; sequence TGVCAVLYQNTRHKSSEEDEDEAGTRVEVSRRIFQTQTSSVQEFPQLI.

In terms of assembly, may interact with KCNU1; this interaction may be required for LRRC52 stability and may change the channel gating properties. Interacts with KCNMA1. Post-translationally, N-glycosylated. As to expression, mainly expressed in testis and skeletal muscle.

It is found in the cell membrane. Functionally, auxiliary protein of the large-conductance, voltage and calcium-activated potassium channel (BK alpha). Modulates gating properties by producing a marked shift in the BK channel's voltage dependence of activation in the hyperpolarizing direction, and in the absence of calcium. KCNU1 channel auxiliary protein. Modulates KCNU1 gating properties. In Homo sapiens (Human), this protein is Leucine-rich repeat-containing protein 52 (LRRC52).